The following is a 748-amino-acid chain: Disintegrin and metalloproteinase domain-containing protein 10 (748 aa).

The signal sequence occupies residues 1-19 (MVLLRVLILLLSWVAGLGG). The propeptide occupies 20-213 (QYGNPLNKYI…NGPELLRKKR (194 aa)). At 20–672 (QYGNPLNKYI…SPELYENIAE (653 aa)) the chain is on the extracellular side. The Cysteine switch motif lies at 171–178 (GGCADHSV). Residue Cys-173 participates in Zn(2+) binding. The Peptidase M12B domain occupies 220 to 456 (NTCQLYIQTD…KRNNCFVESG (237 aa)). Residues Asn-267 and Asn-278 are each glycosylated (N-linked (GlcNAc...) asparagine). 16 disulfide bridges follow: Cys-344–Cys-451, Cys-399–Cys-435, Cys-460–Cys-495, Cys-471–Cys-484, Cys-473–Cys-479, Cys-483–Cys-515, Cys-503–Cys-511, Cys-510–Cys-536, Cys-524–Cys-543, Cys-530–Cys-562, Cys-555–Cys-567, Cys-572–Cys-598, Cys-580–Cys-607, Cys-582–Cys-597, Cys-594–Cys-639, and Cys-632–Cys-645. Residue His-383 coordinates Zn(2+). Glu-384 is an active-site residue. Residues His-387 and His-393 each contribute to the Zn(2+) site. An N-linked (GlcNAc...) asparagine glycan is attached at Asn-439. Residues 457–551 (QPICGNGMVE…LCPASDPKPN (95 aa)) enclose the Disintegrin domain. N-linked (GlcNAc...) asparagine glycosylation is present at Asn-551. Residues 673–696 (WIVAYWWAVLLMGIALIMLMAGFI) traverse the membrane as a helical segment. The Cytoplasmic portion of the chain corresponds to 697-748 (KICSVHTPSSNPKLPPPKPLPGTLKRRRPPQPIQQPQRQRPRESYQMGHMRR). The tract at residues 704–748 (PSSNPKLPPPKPLPGTLKRRRPPQPIQQPQRQRPRESYQMGHMRR) is disordered. The short motif at 708–715 (PKLPPPKP) is the SH3-binding element. Thr-719 is modified (phosphothreonine). An SH3-binding motif is present at residues 722–728 (RRRPPQP). The interval 734–748 (RQRPRESYQMGHMRR) is interaction with AP2A1, AP2A2 and AP2M1.

Forms a ternary EFNA5-EPHA3-ADAM10 complex mediating EFNA5 extracellular domain shedding by ADAM10 which regulates the EFNA5-EPHA3 complex internalization and function, the cleavage occurs in trans, with ADAM10 and its substrate being on the membranes of opposing cells. Interacts with the clathrin adapter AP2 complex subunits AP2A1, AP2A2, AP2B1, and AP2M1; this interaction facilitates ADAM10 endocytosis from the plasma membrane during long-term potentiation in hippocampal neurons. Forms a ternary complex composed of ADAM10, EPHA4 and CADH1; within the complex, ADAM10 cleaves CADH1 which disrupts adherens junctions. Interacts with EPHA2. Interacts with NGF in a divalent cation-dependent manner. Interacts with TSPAN14; the interaction promotes ADAM10 maturation and cell surface expression. Interacts with TSPAN5, TSPAN10, TSPAN14, TSPAN15, TSPAN17 and TSPAN33; these interactions regulate ADAM10 substrate specificity, endocytosis and turnover. Interacts (via extracellular domain) with TSPAN33 (via extracellular domain) and (via cytoplasmic domain) with AFDN; interaction with TSPAN33 allows the docking of ADAM10 to zonula adherens through a PDZ11-dependent interaction between TSPAN33 and PLEKHA7 while interaction with AFDN locks ADAM10 at zonula adherens. Interacts with DLG1; this interaction recruits ADAM10 to the cell membrane during long-term depression in hippocampal neurons. Interacts (via extracellular domain) with BACE1 (via extracellular domain). Interacts with FAM171A1. Zn(2+) serves as cofactor. In terms of processing, the precursor is cleaved by furin and PCSK7. As to expression, expressed at low level in kidney, spleen, lung, adrenal, heart and peripheral nerve.

The protein resides in the golgi apparatus membrane. The protein localises to the cell membrane. It localises to the cytoplasmic vesicle. It is found in the clathrin-coated vesicle. Its subcellular location is the cell projection. The protein resides in the axon. The protein localises to the dendrite. It localises to the cell junction. It is found in the adherens junction. Its subcellular location is the cytoplasm. The catalysed reaction is Endopeptidase of broad specificity.. Catalytically inactive when the propeptide is intact and associated with the mature enzyme. The disintegrin and cysteine-rich regions modulate access of substrates to exerts an inhibitory effect on the cleavage of ADAM10 substrates. Functionally, transmembrane metalloprotease which mediates the ectodomain shedding of a myriad of transmembrane proteins, including adhesion proteins, growth factor precursors and cytokines being essential for development and tissue homeostasis. Associates with six members of the tetraspanin superfamily TspanC8 which regulate its exit from the endoplasmic reticulum and its substrate selectivity. Cleaves the membrane-bound precursor of TNF-alpha at '76-Ala-|-Val-77' to its mature soluble form. Responsible for the proteolytical release of soluble JAM3 from endothelial cells surface. Responsible for the proteolytic release of several other cell-surface proteins, including heparin-binding epidermal growth-like factor, ephrin-A2, CD44, CDH2 and for constitutive and regulated alpha-secretase cleavage of amyloid precursor protein (APP). Contributes to the normal cleavage of the cellular prion protein. Involved in the cleavage of the adhesion molecule L1 at the cell surface and in released membrane vesicles, suggesting a vesicle-based protease activity. Also controls the proteolytic processing of Notch and mediates lateral inhibition during neurogenesis. Required for the development of type 1 transitional B cells into marginal zone B cells, probably by cleaving Notch. Responsible for the FasL ectodomain shedding and for the generation of the remnant ADAM10-processed FasL (FasL APL) transmembrane form. Also cleaves the ectodomain of the integral membrane proteins CORIN and ITM2B. Mediates the proteolytic cleavage of LAG3, leading to release the secreted form of LAG3. Mediates the proteolytic cleavage of IL6R and IL11RA, leading to the release of secreted forms of IL6R and IL11RA. Enhances the cleavage of CHL1 by BACE1. Cleaves NRCAM. Cleaves TREM2, resulting in shedding of the TREM2 ectodomain. Involved in the development and maturation of glomerular and coronary vasculature. During development of the cochlear organ of Corti, promotes pillar cell separation by forming a ternary complex with CADH1 and EPHA4 and cleaving CADH1 at adherens junctions. May regulate the EFNA5-EPHA3 signaling. Regulates leukocyte transmigration as a sheddase for the adherens junction protein VE-cadherin/CDH5 in endothelial cells. The protein is Disintegrin and metalloproteinase domain-containing protein 10 (ADAM10) of Bos taurus (Bovine).